A 357-amino-acid polypeptide reads, in one-letter code: Probable xyloglucan endotransglucosylase/hydrolase protein 29 (357 aa).

Positions 1–31 (MRDSIYLLWIDNRLVVIIMMVMMVSCRCVLG) are cleaved as a signal peptide. The 201-residue stretch at 32 to 232 (LENINPIFFD…YTFSPFVSEF (201 aa)) folds into the GH16 domain. Glutamate 117 serves as the catalytic Nucleophile. The active-site Proton donor is the glutamate 121. Xyloglucan-binding positions include glutamate 121 and 134–136 (QTN). N-linked (GlcNAc...) asparagine glycosylation occurs at asparagine 140. Residues 144–148 (NRGRE), 211–212 (SW), and glycine 216 contribute to the xyloglucan site. Residues asparagine 241 and asparagine 262 are each glycosylated (N-linked (GlcNAc...) asparagine). Residues cysteine 299 and cysteine 312 are joined by a disulfide bond. Arginine 304 lines the xyloglucan pocket. A disordered region spans residues 326-357 (GRLKFGGSHPKVHKARKKRRRNRSTPVVSADL). Over residues 335–348 (PKVHKARKKRRRNR) the composition is skewed to basic residues. Asparagine 347 carries an N-linked (GlcNAc...) asparagine glycan.

It belongs to the glycosyl hydrolase 16 family. XTH group 3 subfamily. Post-translationally, contains at least one intrachain disulfide bond essential for its enzymatic activity.

The protein resides in the secreted. It is found in the cell wall. It localises to the extracellular space. Its subcellular location is the apoplast. It carries out the reaction breaks a beta-(1-&gt;4) bond in the backbone of a xyloglucan and transfers the xyloglucanyl segment on to O-4 of the non-reducing terminal glucose residue of an acceptor, which can be a xyloglucan or an oligosaccharide of xyloglucan.. Its function is as follows. Catalyzes xyloglucan endohydrolysis (XEH) and/or endotransglycosylation (XET). Cleaves and religates xyloglucan polymers, an essential constituent of the primary cell wall, and thereby participates in cell wall construction of growing tissues. The sequence is that of Probable xyloglucan endotransglucosylase/hydrolase protein 29 (XTH29) from Arabidopsis thaliana (Mouse-ear cress).